The sequence spans 502 residues: uncharacterized protein (502 aa).

This is an uncharacterized protein from Frog virus 3 (isolate Goorha) (FV-3).